The following is a 338-amino-acid chain: Nucleoid-associated protein HI_0839 (338 aa).

This sequence belongs to the YejK family.

It localises to the cytoplasm. It is found in the nucleoid. The protein is Nucleoid-associated protein HI_0839 of Haemophilus influenzae (strain ATCC 51907 / DSM 11121 / KW20 / Rd).